A 64-amino-acid polypeptide reads, in one-letter code: MNKVYLVAVLVLFLALTINESNEAVPTGGCPFSDFFCAKRCKDMKFGNTGRCTGPNKTVCKCSI.

An N-terminal signal peptide occupies residues 1 to 21 (MNKVYLVAVLVLFLALTINES). 3 disulfides stabilise this stretch: cysteine 30-cysteine 52, cysteine 37-cysteine 60, and cysteine 41-cysteine 62.

The protein belongs to the short scorpion toxin superfamily. Potassium channel inhibitor family. Alpha-KTx 11 subfamily. Expressed by the venom gland.

Its subcellular location is the secreted. Functionally, this recombinant toxin inhibits mammalian voltage-gated potassium channels Kv1.3/KCNA3 (IC(50)=0.79 nM) and Kv1.2/KCNA2 (IC(50)=26.4 nM). In Olivierus martensii (Manchurian scorpion), this protein is Potassium channel toxin alpha-KTx J123.